Consider the following 294-residue polypeptide: Phosphoribosylaminoimidazole-succinocarboxamide synthase (294 aa).

The protein belongs to the SAICAR synthetase family.

The enzyme catalyses 5-amino-1-(5-phospho-D-ribosyl)imidazole-4-carboxylate + L-aspartate + ATP = (2S)-2-[5-amino-1-(5-phospho-beta-D-ribosyl)imidazole-4-carboxamido]succinate + ADP + phosphate + 2 H(+). It functions in the pathway purine metabolism; IMP biosynthesis via de novo pathway; 5-amino-1-(5-phospho-D-ribosyl)imidazole-4-carboxamide from 5-amino-1-(5-phospho-D-ribosyl)imidazole-4-carboxylate: step 1/2. The sequence is that of Phosphoribosylaminoimidazole-succinocarboxamide synthase from Rhodococcus opacus (strain B4).